The chain runs to 382 residues: UDP-4-amino-4-deoxy-L-arabinose--oxoglutarate aminotransferase (382 aa).

K183 carries the post-translational modification N6-(pyridoxal phosphate)lysine.

Belongs to the DegT/DnrJ/EryC1 family. ArnB subfamily. In terms of assembly, homodimer. The cofactor is pyridoxal 5'-phosphate.

It carries out the reaction UDP-4-amino-4-deoxy-beta-L-arabinose + 2-oxoglutarate = UDP-beta-L-threo-pentopyranos-4-ulose + L-glutamate. It participates in nucleotide-sugar biosynthesis; UDP-4-deoxy-4-formamido-beta-L-arabinose biosynthesis; UDP-4-deoxy-4-formamido-beta-L-arabinose from UDP-alpha-D-glucuronate: step 2/3. It functions in the pathway bacterial outer membrane biogenesis; lipopolysaccharide biosynthesis. In terms of biological role, catalyzes the conversion of UDP-4-keto-arabinose (UDP-Ara4O) to UDP-4-amino-4-deoxy-L-arabinose (UDP-L-Ara4N). The modified arabinose is attached to lipid A and is required for resistance to polymyxin and cationic antimicrobial peptides. The chain is UDP-4-amino-4-deoxy-L-arabinose--oxoglutarate aminotransferase from Pseudomonas fluorescens (strain Pf0-1).